The chain runs to 246 residues: Short chain dehydrogenase/reductase dmxR12 (246 aa).

Isoleucine 15, serine 34, lysine 125, and lysine 164 together coordinate NADP(+). Catalysis depends on lysine 164, which acts as the Lowers pKa of active site Tyr.

It belongs to the short-chain dehydrogenases/reductases (SDR) family.

It participates in secondary metabolite biosynthesis. Short chain dehydrogenase/reductase; part of the gene cluster that mediates the biosynthesis of the dimeric xanthones cryptosporioptides. The pathway begins with the synthesis of atrochrysone thioester by the polyketide synthase dmx-nrPKS. The atrochrysone carboxyl ACP thioesterase dmxR1 then breaks the thioester bond and releases the atrochrysone carboxylic acid from dmx-nrPKS. Atrochrysone carboxylic acid is decarboxylated by the decarboxylase dmxR15, and oxidized by the anthrone oxygenase dmxR16 to yield emodin. Emodin is then reduced to emodin hydroquinone by the oxidoreductase dmxR7. A-ring reduction by the short chain dehydrogenase dmxR18, dehydration by the scytalone dehydratase-like protein dmxR17 and probable spontaneous re-oxidation, results in overall deoxygenation to chrysophanol. Baeyer-Villiger oxidation by the Baeyer-Villiger monooxygenase (BVMO) dmxR6 then yields monodictylactone in equilibrium with monodictyphenone. In the case of the cryptosporioptides biosynthesis, monodictylactone is reduced at C-12 to an alcohol (by the short chain dehydrogenases dmxR12 or dmxR8) and hydroxylated at C-5 by dmxR9, yielding the electron-rich aromatic which could eliminate H(2)O to form the ortho-quinonemethide, followed by tautomerisation to paraquinone and complete the formal reduction to produce the 10-methylgroup. Conjugate addition of C-4a-OH to the resulting paraquinone by the monooxygenase dmxR10 then gives cyclohexadienone, which is then reduced at C-5 by the short chain dehydrogenase dmxR3 to give the dihydroxanthone. The 6,7-epoxide in the cryptosporioptides could be introduced by the cytochrome P450 monooxygenase dmxL3. The highly reducing PKS dmxL2 manufactures butyrate, which is further carboxylated by dmxL1 to form ethylmalonate. It is not yet clear whether the carboxylation occurs while the butyrate is attached to the ACP of dmxL2, but this unusual fungal metabolite could then be esterified to O-5 by the O-acetyltransferase dmxR13. Finally, dimerization performed by dmxR5 gives the observed dimers cryptosporioptides A, B and C as the final products of the pathway. The sequence is that of Short chain dehydrogenase/reductase dmxR12 from Cryptosporiopsis sp. (strain 8999).